Consider the following 203-residue polypeptide: Glutathione-specific gamma-glutamylcyclotransferase (203 aa).

A substrate-binding site is contributed by 12-17 (VFGYGS). Catalysis depends on Glu-105, which acts as the Proton acceptor.

The protein belongs to the gamma-glutamylcyclotransferase family. ChaC subfamily.

It localises to the cytoplasm. It is found in the nucleus. It carries out the reaction glutathione = L-cysteinylglycine + 5-oxo-L-proline. In terms of biological role, gamma-glutamylcyclotransferase acting specifically on glutathione, but not on other gamma-glutamyl peptides. Allows utilization of gluthathione through subsequent cleavage of the Cys-Gly dipeptide by Cys-Gly metallodipeptidase dug1. In Schizosaccharomyces pombe (strain 972 / ATCC 24843) (Fission yeast), this protein is Glutathione-specific gamma-glutamylcyclotransferase.